Consider the following 1017-residue polypeptide: uncharacterized protein (1017 aa).

The tat-type signal signal peptide spans 1–34 (MGNLTMSRRTFVKTAAITGAAAAAFGASTHTALA). A 4Fe-4S Mo/W bis-MGD-type domain is found at 45–103 (DTVAVKTCCRGCGKMECGVKVIVQNGRAIRVEGDEGAFQSMGNCCTKSQSSIQAAYHPD). [4Fe-4S] cluster is bound by residues Cys53, Cys56, Cys61, and Cys89. The active-site Electron donor/acceptor is the Lys91.

It belongs to the prokaryotic molybdopterin-containing oxidoreductase family. [4Fe-4S] cluster is required as a cofactor. The cofactor is Mo-bis(molybdopterin guanine dinucleotide). Predicted to be exported by the Tat system. The position of the signal peptide cleavage has not been experimentally proven.

This is an uncharacterized protein from Eggerthella lenta (strain ATCC 25559 / DSM 2243 / CCUG 17323 / JCM 9979 / KCTC 3265 / NCTC 11813 / VPI 0255 / 1899 B) (Eubacterium lentum).